Consider the following 253-residue polypeptide: E3 ubiquitin-protein ligase MARCHF3 (253 aa).

The segment at Ser-63–Glu-123 adopts an RING-CH-type zinc-finger fold. Cys-71, Cys-74, Cys-87, Cys-89, His-97, Cys-100, Cys-113, and Cys-116 together coordinate Zn(2+). A run of 2 helical transmembrane segments spans residues Leu-145 to Leu-165 and Ala-182 to Val-202. A phosphoserine mark is found at Ser-237 and Ser-243.

Interacts with MARCHF2 and STX6. As to expression, expressed predominantly in lung, colon and spleen. Present in liver (at protein level).

The protein localises to the cytoplasmic vesicle membrane. Its subcellular location is the early endosome membrane. It carries out the reaction S-ubiquitinyl-[E2 ubiquitin-conjugating enzyme]-L-cysteine + [acceptor protein]-L-lysine = [E2 ubiquitin-conjugating enzyme]-L-cysteine + N(6)-ubiquitinyl-[acceptor protein]-L-lysine.. It functions in the pathway protein modification; protein ubiquitination. Functionally, E3 ubiquitin-protein ligase which may be involved in endosomal trafficking. E3 ubiquitin ligases accept ubiquitin from an E2 ubiquitin-conjugating enzyme in the form of a thioester and then directly transfer the ubiquitin to targeted substrates. This chain is E3 ubiquitin-protein ligase MARCHF3 (Marchf3), found in Rattus norvegicus (Rat).